The primary structure comprises 391 residues: Tryptophan synthase beta chain 2 (391 aa).

The residue at position 83 (Lys-83) is an N6-(pyridoxal phosphate)lysine.

This sequence belongs to the TrpB family. Tetramer of two alpha and two beta chains. Pyridoxal 5'-phosphate is required as a cofactor.

It carries out the reaction (1S,2R)-1-C-(indol-3-yl)glycerol 3-phosphate + L-serine = D-glyceraldehyde 3-phosphate + L-tryptophan + H2O. The protein operates within amino-acid biosynthesis; L-tryptophan biosynthesis; L-tryptophan from chorismate: step 5/5. Functionally, the beta subunit is responsible for the synthesis of L-tryptophan from indole and L-serine. This is Tryptophan synthase beta chain 2 (trpB2) from Chlamydia caviae (strain ATCC VR-813 / DSM 19441 / 03DC25 / GPIC) (Chlamydophila caviae).